The primary structure comprises 23 residues: Ocellatin-LB2 (23 aa).

At Asn-23 the chain carries Asparagine amide.

In terms of tissue distribution, expressed by the skin glands.

It localises to the secreted. Functionally, antibacterial peptide that inhibits the Gram-negative bacterium A.actinomycetemcomitans ATCC 29522 (MIC=210 uM). No activity against the bacteria E.coli ATCC 25922 and S.aureus ATCC 25923, or the fungi C.albicans ATCC 18804 and C.lusitaniae ATCC 56936. Does not show hemolytic activity towards rabbit erythrocytes. The polypeptide is Ocellatin-LB2 (Leptodactylus labyrinthicus (Labyrinth frog)).